Reading from the N-terminus, the 819-residue chain is Lon protease (819 aa).

Residues Met-1–Pro-14 show a composition bias toward polar residues. The disordered stretch occupies residues Met-1–Ser-40. Basic and acidic residues predominate over residues Glu-18–Pro-38. The Lon N-terminal domain occupies Leu-42 to Leu-239. Gly-392 to Thr-399 serves as a coordination point for ATP. Residues Lys-634–Gly-818 enclose the Lon proteolytic domain. Residues Ser-724 and Lys-767 contribute to the active site.

Belongs to the peptidase S16 family. In terms of assembly, homohexamer. Organized in a ring with a central cavity.

The protein resides in the cytoplasm. It catalyses the reaction Hydrolysis of proteins in presence of ATP.. Functionally, ATP-dependent serine protease that mediates the selective degradation of mutant and abnormal proteins as well as certain short-lived regulatory proteins. Required for cellular homeostasis and for survival from DNA damage and developmental changes induced by stress. Degrades polypeptides processively to yield small peptide fragments that are 5 to 10 amino acids long. Binds to DNA in a double-stranded, site-specific manner. This Chlamydia trachomatis serovar D (strain ATCC VR-885 / DSM 19411 / UW-3/Cx) protein is Lon protease.